A 475-amino-acid chain; its full sequence is Ribulose bisphosphate carboxylase large chain (475 aa).

The propeptide occupies Met-1–Ser-2. Residue Pro-3 is modified to N-acetylproline. The residue at position 14 (Lys-14) is an N6,N6,N6-trimethyllysine. Substrate-binding residues include Asn-123 and Thr-173. The active-site Proton acceptor is Lys-175. Lys-177 is a binding site for substrate. Lys-201, Asp-203, and Glu-204 together coordinate Mg(2+). Lys-201 carries the N6-carboxylysine modification. Residue His-294 is the Proton acceptor of the active site. The substrate site is built by Arg-295, His-327, and Ser-379.

It belongs to the RuBisCO large chain family. Type I subfamily. In terms of assembly, heterohexadecamer of 8 large chains and 8 small chains; disulfide-linked. The disulfide link is formed within the large subunit homodimers. The cofactor is Mg(2+). In terms of processing, the disulfide bond which can form in the large chain dimeric partners within the hexadecamer appears to be associated with oxidative stress and protein turnover.

Its subcellular location is the plastid. It localises to the chloroplast. It catalyses the reaction 2 (2R)-3-phosphoglycerate + 2 H(+) = D-ribulose 1,5-bisphosphate + CO2 + H2O. The catalysed reaction is D-ribulose 1,5-bisphosphate + O2 = 2-phosphoglycolate + (2R)-3-phosphoglycerate + 2 H(+). Its function is as follows. RuBisCO catalyzes two reactions: the carboxylation of D-ribulose 1,5-bisphosphate, the primary event in carbon dioxide fixation, as well as the oxidative fragmentation of the pentose substrate in the photorespiration process. Both reactions occur simultaneously and in competition at the same active site. In Eucalyptus globulus subsp. globulus (Tasmanian blue gum), this protein is Ribulose bisphosphate carboxylase large chain.